The following is a 309-amino-acid chain: Glutaminase (309 aa).

Positions 64, 114, 160, 167, 191, 243, and 261 each coordinate substrate.

This sequence belongs to the glutaminase family. As to quaternary structure, homotetramer.

The catalysed reaction is L-glutamine + H2O = L-glutamate + NH4(+). This is Glutaminase from Agrobacterium fabrum (strain C58 / ATCC 33970) (Agrobacterium tumefaciens (strain C58)).